Consider the following 73-residue polypeptide: Large ribosomal subunit protein bL31 (73 aa).

This sequence belongs to the bacterial ribosomal protein bL31 family. Type A subfamily. As to quaternary structure, part of the 50S ribosomal subunit.

Binds the 23S rRNA. This Roseobacter denitrificans (strain ATCC 33942 / OCh 114) (Erythrobacter sp. (strain OCh 114)) protein is Large ribosomal subunit protein bL31 (rpmE).